Consider the following 208-residue polypeptide: Uracil phosphoribosyltransferase (208 aa).

5-phospho-alpha-D-ribose 1-diphosphate contacts are provided by residues Arg-78, Arg-103, and 130–138; that span reads DPMLATGGS. Residues Ile-193 and 198–200 each bind uracil; that span reads GDA. Position 199 (Asp-199) interacts with 5-phospho-alpha-D-ribose 1-diphosphate.

This sequence belongs to the UPRTase family. The cofactor is Mg(2+).

The catalysed reaction is UMP + diphosphate = 5-phospho-alpha-D-ribose 1-diphosphate + uracil. It functions in the pathway pyrimidine metabolism; UMP biosynthesis via salvage pathway; UMP from uracil: step 1/1. Its activity is regulated as follows. Allosterically activated by GTP. Catalyzes the conversion of uracil and 5-phospho-alpha-D-ribose 1-diphosphate (PRPP) to UMP and diphosphate. This is Uracil phosphoribosyltransferase from Shewanella frigidimarina (strain NCIMB 400).